A 614-amino-acid polypeptide reads, in one-letter code: Vitamin B12 transporter BtuB (614 aa).

A signal peptide spans 1–20; the sequence is MIKKASLLTACSVTAFSAWA. A TonB box motif is present at residues 26–33; sequence DTLVVTAN. Positions 38–152 constitute a TBDR plug domain; that stretch reads PRSTVLAPTT…IGGVVNIITT (115 aa). Residues Leu83, Ser85, Asn92, and 110–111 contribute to the cyanocob(III)alamin site; that span reads GS. The region spanning 155 to 614 is the TBDR beta-barrel domain; it reads EPGTEISAGW…EYTLSGSYTF (460 aa). A run of 3 beta stranded transmembrane segments spans residues 158–165, 169–178, and 184–195; these read TEISAGWG, YQNYDVSTQQ, and TRVTLLGDYAHT. Ca(2+) contacts are provided by Asp199, Gln211, Asp213, and Asp215. 2 consecutive transmembrane segments (beta stranded) span residues 217 to 227 and 232 to 248; these read FLSKTLYGALE and DAWS…NRTN. Ca(2+) is bound by residues Tyr249 and Asp250. Residue Ala251 coordinates cyanocob(III)alamin. A Ca(2+)-binding site is contributed by Asp261. Transmembrane regions (beta stranded) follow at residues 263-277, 279-296, 309-325, 328-337, 353-369, 371-381, 385-400, 403-417, 434-443, 449-458, 473-490, 494-509, 517-529, and 535-550; these read RKLY…LRYN, ELIK…KDYN, TLDE…NNII, HGNVGAGVDW, YDQR…QQVG, FTFEGAARSDD, FGRH…WEFI, YRFI…KAPN, KSKQWEGAFE, VNWRISGYRN, YYNE…TANF, PLTH…ARNA, RRAK…QLDW, and DWGI…YDKD. Residue Thr309 participates in cyanocob(III)alamin binding. Position 517 (Arg517) interacts with cyanocob(III)alamin. Tyr551 provides a ligand contact to cyanocob(III)alamin. The next 3 membrane-spanning stretches (beta stranded) occupy residues 558–572, 585–596, and 602–614; these read TVKM…LAVA, IANLFDKDYETV, and AGRE…SYTF. The short motif at 597–614 is the TonB C-terminal box element; it reads YGYQTAGREYTLSGSYTF.

It belongs to the TonB-dependent receptor family. BtuB (TC 1.B.14.3.1) subfamily.

Its subcellular location is the cell outer membrane. Its function is as follows. Involved in the active translocation of vitamin B12 (cyanocobalamin) across the outer membrane to the periplasmic space. It derives its energy for transport by interacting with the trans-periplasmic membrane protein TonB. This Escherichia coli O157:H7 protein is Vitamin B12 transporter BtuB.